The chain runs to 272 residues: MKIQILCFTTLFLAIFTSQVTTAYKFKFDYFGNGTDPISFHGDAEYGPDTDGKSRSGAIALTRDNIPFSHGRAIFTTPITFKPNASALYPFKTSFTFSITPKTNPNQGHGLAFIVVPSNQNDAGSGLGYLSLLNRTNNGNPNNHLFAVEFDVFQDKSLGDMNDNHVGIDINSVDSVVSVKSGYWVMTRSGWLFKDLKLSSGDRYKAWIEYNNNYKVVSVTIGLAHLKKPNRPLIEAKFDLSKVIHEVMYTGFAGSMGRGVERHEIWDWTFQN.

Residues 1-23 (MKIQILCFTTLFLAIFTSQVTTA) form the signal peptide. The interval 24-271 (YKFKFDYFGN…RHEIWDWTFQ (248 aa)) is legume-lectin like. N-linked (GlcNAc...) asparagine glycans are attached at residues Asn-33, Asn-84, and Asn-134. The residue at position 241 (Ser-241) is a Phosphoserine.

The protein belongs to the leguminous lectin family.

It localises to the secreted. It is found in the extracellular space. Its subcellular location is the apoplast. This chain is Lectin-like protein At1g53070, found in Arabidopsis thaliana (Mouse-ear cress).